Reading from the N-terminus, the 138-residue chain is Large ribosomal subunit protein uL16 (138 aa).

Residues 1–16 show a composition bias toward basic residues; that stretch reads MLIPKRVKFRRQHRPN. A disordered region spans residues 1-25; sequence MLIPKRVKFRRQHRPNRSGMSKGGN.

It belongs to the universal ribosomal protein uL16 family. Part of the 50S ribosomal subunit.

Binds 23S rRNA and is also seen to make contacts with the A and possibly P site tRNAs. This Corynebacterium urealyticum (strain ATCC 43042 / DSM 7109) protein is Large ribosomal subunit protein uL16.